A 488-amino-acid chain; its full sequence is Metalloreductase STEAP3 (488 aa).

The Cytoplasmic portion of the chain corresponds to 1-207; the sequence is MSGEMDKPLI…AREVEAIPLR (207 aa). Phosphoserine is present on residues serine 11, serine 17, and serine 20. NADP(+) contacts are provided by residues 36–39, 58–59, 91–98, asparagine 116, and alanine 151; these read SGDF, SR, and VFREHYSS. Positions 152 and 160 each coordinate FAD. Residues 208–228 form a helical membrane-spanning segment; the sequence is LLPSWKVPTLLALGLFVCFYA. Tyrosine 229 provides a ligand contact to Fe(3+). The Vesicular portion of the chain corresponds to 229–258; the sequence is YNFIRDVLQPYIRKDENKFYKMPLSVVNTT. Asparagine 256 is a glycosylation site (N-linked (GlcNAc...) asparagine). Residues 259–279 traverse the membrane as a helical segment; that stretch reads LPCVAYVLLSLVYLPGVLAAA. The Ferric oxidoreductase domain occupies 259–407; it reads LPCVAYVLLS…LGFVALMLST (149 aa). The Cytoplasmic segment spans residues 280 to 304; it reads LQLRRGTKYQRFPDWLDHWLQHRKQ. FAD contacts are provided by glutamine 281, arginine 302, and lysine 303. The chain crosses the membrane as a helical span at residues 305-325; sequence IGLLSFFFAMLHALYSFCLPL. Residue histidine 316 coordinates heme b. Tyrosine 319 contacts Fe(3+). The Vesicular segment spans residues 326-358; it reads RRSHRYDLVNLAVKQVLANKSRLWVEEEVWRME. The chain crosses the membrane as a helical span at residues 359-379; sequence IYLSLGVLALGMLSLLAVTSI. Serine 378 serves as a coordination point for FAD. The Cytoplasmic portion of the chain corresponds to 380–390; it reads PSIANSLNWKE. The helical transmembrane segment at 391 to 411 threads the bilayer; the sequence is FSFVQSTLGFVALMLSTMHTL. An FAD-binding site is contributed by glutamine 395. Histidine 409 contributes to the heme b binding site. At 412–433 the chain is on the vesicular side; sequence TYGWTRAFEENHYKFYLPPTFT. Residues 434–454 form a helical membrane-spanning segment; the sequence is LTLLLPCVIILAKGLFLLPCL. The Cytoplasmic segment spans residues 455 to 488; it reads SHRLTKIRRGWERDGAVKFMLPAGHTQGEKTSHV. Phosphoserine is present on serine 486.

Belongs to the STEAP family. Homodimer. Interacts with BNIP3L, MYT1, RHBDL4/RHBDD1 and TCTP. The cofactor is FAD. Heme b serves as cofactor. In terms of processing, proteolytically cleaved by RHBDL4/RHBDD1. RHBDL4/RHBDD1-induced cleavage occurs at multiple sites in a glycosylation-independent manner. Post-translationally, glycosylated.

It is found in the endosome membrane. It carries out the reaction 2 Fe(2+) + NADP(+) + H(+) = 2 Fe(3+) + NADPH. The catalysed reaction is 2 Cu(+) + NADP(+) + H(+) = 2 Cu(2+) + NADPH. In terms of biological role, integral membrane protein that functions as a NADPH-dependent ferric-chelate reductase, using NADPH from one side of the membrane to reduce a Fe(3+) chelate that is bound on the other side of the membrane. Mediates sequential transmembrane electron transfer from NADPH to FAD and onto heme, and finally to the Fe(3+) chelate. Can also reduce Cu(2+) to Cu(1+). Mediates efficient transferrin-dependent iron uptake in erythroid cells. May play a role downstream of p53/TP53 to interface apoptosis and cell cycle progression. Indirectly involved in exosome secretion by facilitating the secretion of proteins such as TCTP. The chain is Metalloreductase STEAP3 (Steap3) from Rattus norvegicus (Rat).